The following is a 295-amino-acid chain: Alpha-1A adrenergic receptor (295 aa).

At methionine 1–isoleucine 27 the chain is on the extracellular side. Residues asparagine 7, asparagine 13, and asparagine 22 are each glycosylated (N-linked (GlcNAc...) asparagine). Residues leucine 28–valine 51 form a helical membrane-spanning segment. Over alanine 52–tyrosine 64 the chain is Cytoplasmic. Residues isoleucine 65–isoleucine 88 traverse the membrane as a helical segment. Over leucine 89 to cysteine 99 the chain is Extracellular. A disulfide bridge links cysteine 99 with cysteine 176. A helical transmembrane segment spans residues asparagine 100–isoleucine 122. At aspartate 123 to glycine 143 the chain is on the cytoplasmic side. A helical membrane pass occupies residues leucine 144 to glutamine 167. Residues proline 168–glutamate 181 lie on the Extracellular side of the membrane. Residues proline 182–cysteine 205 traverse the membrane as a helical segment. The Cytoplasmic segment spans residues arginine 206–threonine 273. Phosphoserine; by PKA is present on serine 215. Residues leucine 274–glycine 295 traverse the membrane as a helical segment.

This sequence belongs to the G-protein coupled receptor 1 family. Adrenergic receptor subfamily. ADRA1A sub-subfamily. As to quaternary structure, homo- and heterooligomer. Heterooligomerizes with ADRA1B homooligomers in cardiac myocytes. Interacts with CAVIN4.

The protein resides in the nucleus membrane. It localises to the cell membrane. The protein localises to the cytoplasm. Its subcellular location is the membrane. It is found in the caveola. In terms of biological role, this alpha-adrenergic receptor mediates its action by association with G proteins that activate a phosphatidylinositol-calcium second messenger system. Its effect is mediated by G(q) and G(11) proteins. Nuclear ADRA1A-ADRA1B heterooligomers regulate phenylephrine (PE)-stimulated ERK signaling in cardiac myocytes. The sequence is that of Alpha-1A adrenergic receptor (ADRA1A) from Canis lupus familiaris (Dog).